A 701-amino-acid polypeptide reads, in one-letter code: MDESPEPLQQGRGPVPVRRQRPAPRGLREMLKARLWCSCSCSVLCVRALVQDLLPATRWLRQYRPREYLAGDVMSGLVIGIILVPQAIAYSLLAGLQPIYSLYTSFFANLIYFLMGTSRHVSVGIFSLLCLMVGQVVDRELQLAGFDPSQDGLQPGANSSTLNGSAAMLDCGRDCYAIRVATALTLMTGLYQVLMGVLRLGFVSAYLSQPLLDGFAMGASVTILTSQLKHLLGVRIPRHQGPGMVVLTWLSLLRGAGQANVCDVVTSTVCLAVLLAAKELSDRYRHRLRVPLPTELLVIVVATLVSHFGQLHKRFGSSVAGDIPTGFMPPQVPEPRLMQRVALDAVALALVAAAFSISLAEMFARSHGYSVRANQELLAVGCCNVLPAFLHCFATSAALAKSLVKTATGCRTQLSSVVSATVVLLVLLALAPLFHDLQRSVLACVIVVSLRGALRKVWDLPRLWRMSPADALVWAGTAATCMLVSTEAGLLAGVILSLLSLAGRTQRPRTALLARIGDTAFYEDATEFEGLVPEPGVRVFRFGGPLYYANKDFFLQSLYSLTGLDAGCMAARRKEGGSETGVGEGGPAQGEDLGPVSTRAALVPAAAGFHTVVIDCAPLLFLDAAGVSTLQDLRRDYGALGISLLLACCSPPVRDILSRGGFLGEGPGDTAEEEQLFLSVHDAVQTARARHRELEATDAHL.

The segment at 1–20 (MDESPEPLQQGRGPVPVRRQ) is disordered. Helical transmembrane passes span 68–90 (YLAGDVMSGLVIGIILVPQAIAY) and 94–116 (AGLQPIYSLYTSFFANLIYFLMG). Residues Asn-158 and Asn-163 are each glycosylated (N-linked (GlcNAc...) asparagine). Transmembrane regions (helical) follow at residues 176-198 (YAIRVATALTLMTGLYQVLMGVL), 255-277 (GAGQANVCDVVTSTVCLAVLLAA), 290-309 (VPLPTELLVIVVATLVSHFG), 342-364 (ALDAVALALVAAAFSISLAEMFA), 377-399 (LLAVGCCNVLPAFLHCFATSAAL), 412-434 (TQLSSVVSATVVLLVLLALAPLF), and 472-494 (LVWAGTAATCMLVSTEAGLLAGV). The STAS domain maps to 527–687 (EFEGLVPEPG…LSVHDAVQTA (161 aa)).

Belongs to the SLC26A/SulP transporter (TC 2.A.53) family. Expressed most abundantly in the kidney and liver, with lower levels in the pancreas, testis, brain, small intestine, colon, and lung.

It is found in the cell membrane. Its subcellular location is the basolateral cell membrane. It catalyses the reaction thiosulfate(in) + sulfate(out) = thiosulfate(out) + sulfate(in). The enzyme catalyses 2 hydrogencarbonate(out) + sulfate(in) = 2 hydrogencarbonate(in) + sulfate(out). It carries out the reaction oxalate(in) + sulfate(out) = oxalate(out) + sulfate(in). The catalysed reaction is oxalate(in) + 2 hydrogencarbonate(out) = oxalate(out) + 2 hydrogencarbonate(in). Its function is as follows. Sodium-independent sulfate anion transporter. Can transport other anions including bicarbonate, thiosulfate and oxalate by mediating sulfate-thiosulfate, sulfate-hydrogencarbonate and sulfate-oxalate anion exchange. Mediates oxalate-hydrogencarbonate anion exchange. This chain is Sulfate anion transporter 1 (SLC26A1), found in Homo sapiens (Human).